The sequence spans 282 residues: Transformer-2 protein homolog alpha (282 aa).

The interval 1–118 (MSDVEENNFE…TGSRANPDPN (118 aa)) is disordered. The residue at position 2 (Ser-2) is an N-acetylserine. Ser-2 and Ser-14 each carry phosphoserine. Thr-24 carries the post-translational modification Phosphothreonine. Over residues 51–84 (RSRSKSRSRSRRHSHRRYTRSRSHSHSHRRRSRS) the composition is skewed to basic residues. Residues Ser-82, Ser-84, and Ser-86 each carry the phosphoserine modification. Residue Thr-88 is modified to Phosphothreonine. Positions 92 to 110 (RRRRSRSHSPMSNRRRHTG) are enriched in basic residues. 2 positions are modified to phosphoserine: Ser-96 and Ser-98. Residues 119–197 (TCLGVFGLSL…RRIRVDYSIT (79 aa)) enclose the RRM domain. A Glycyl lysine isopeptide (Lys-Gly) (interchain with G-Cter in SUMO2) cross-link involves residue Lys-198. A linker region spans residues 198–225 (KRAHTPTPGIYMGRPTHSGGGGGGGGGG). Disordered stretches follow at residues 201–245 (HTPT…YDRG) and 260–282 (SPSPYYSRYRSRSRSRSYSPRRY). Phosphothreonine occurs at positions 202 and 204. Over residues 215–230 (SGGGGGGGGGGGGGGG) the composition is skewed to gly residues. Arg-232 is modified (omega-N-methylarginine). The segment covering 232–245 (RRRDSYYDRGYDRG) has biased composition (basic and acidic residues). Phosphoserine is present on Ser-236. Residues 268–282 (YRSRSRSRSYSPRRY) are compositionally biased toward basic residues.

Belongs to the splicing factor SR family. As to quaternary structure, binds to A3 enhancer proteins SRp75, SRp55, SRp40 and SRp30. Interacts with ILDR1 (via C-terminus) and ILDR2. Post-translationally, phosphorylated in the RS domains.

The protein localises to the nucleus. Its function is as follows. Sequence-specific RNA-binding protein which participates in the control of pre-mRNA splicing. This chain is Transformer-2 protein homolog alpha, found in Homo sapiens (Human).